A 343-amino-acid polypeptide reads, in one-letter code: Selenide, water dikinase (343 aa).

The active site involves Cys-15. ATP is bound by residues Lys-18 and Asn-46 to Asp-48. A Mg(2+)-binding site is contributed by Asp-49. ATP-binding positions include Asp-66, Asp-89, and Gly-137–Ser-139. Position 89 (Asp-89) interacts with Mg(2+). Asp-225 provides a ligand contact to Mg(2+).

This sequence belongs to the selenophosphate synthase 1 family. Class I subfamily. As to quaternary structure, homodimer. Mg(2+) is required as a cofactor.

It carries out the reaction hydrogenselenide + ATP + H2O = selenophosphate + AMP + phosphate + 2 H(+). Its function is as follows. Synthesizes selenophosphate from selenide and ATP. The polypeptide is Selenide, water dikinase (Sulfurovum sp. (strain NBC37-1)).